We begin with the raw amino-acid sequence, 173 residues long: Pyrimidine operon regulatory protein (173 aa).

Substrate-binding positions include 40 to 41 (TR), 97 to 105 (DDVLYTGRT), and R130. The short motif at 93-105 (VILVDDVLYTGRT) is the PRPP-binding element.

This sequence belongs to the purine/pyrimidine phosphoribosyltransferase family. PyrR subfamily.

In terms of biological role, regulates transcriptional attenuation of the pyrimidine nucleotide (pyr) operon in response to exogenous pyrimidines, probably by binding to specific sites on pyr mRNA. This probably disrupts an antiterminator hairpin in the RNA and favors formation of a downstream transcription terminator, leading to a reduced expression of downstream genes. This is Pyrimidine operon regulatory protein from Lactococcus lactis subsp. lactis (strain IL1403) (Streptococcus lactis).